A 222-amino-acid polypeptide reads, in one-letter code: uncharacterized protein (222 aa).

Belongs to the PhoU family.

The protein localises to the cytoplasm. Not known; probably involved in phosphate transport and/or metabolism. This is an uncharacterized protein from Deinococcus radiodurans (strain ATCC 13939 / DSM 20539 / JCM 16871 / CCUG 27074 / LMG 4051 / NBRC 15346 / NCIMB 9279 / VKM B-1422 / R1).